A 471-amino-acid polypeptide reads, in one-letter code: Methionine aminopeptidase 2 (471 aa).

Disordered regions lie at residues 16 to 80 (VVDD…IDRF) and 92 to 139 (CEHP…DFNR). Residues 32-47 (EDGDDNDDAVNEGEAV) are compositionally biased toward acidic residues. Basic residues predominate over residues 52–65 (KKKKKKNKKKKKKG). The span at 119–139 (AEERAKDDAKHGSDDPLDFNR) shows a compositional bias: basic and acidic residues. A substrate-binding site is contributed by His-224. Asp-244, Asp-255, and His-324 together coordinate a divalent metal cation. His-332 is a substrate binding site. Residues Glu-357 and Glu-452 each contribute to the a divalent metal cation site.

Belongs to the peptidase M24A family. Methionine aminopeptidase eukaryotic type 2 subfamily. Co(2+) is required as a cofactor. The cofactor is Zn(2+). Requires Mn(2+) as cofactor. Fe(2+) serves as cofactor.

The protein resides in the cytoplasm. The enzyme catalyses Release of N-terminal amino acids, preferentially methionine, from peptides and arylamides.. Cotranslationally removes the N-terminal methionine from nascent proteins. The N-terminal methionine is often cleaved when the second residue in the primary sequence is small and uncharged (Met-Ala-, Cys, Gly, Pro, Ser, Thr, or Val). In Yarrowia lipolytica (strain CLIB 122 / E 150) (Yeast), this protein is Methionine aminopeptidase 2.